Consider the following 493-residue polypeptide: Intermediate cleaving peptidase 55, mitochondrial (493 aa).

Residues 1-19 (MQFLARNLVRRVSRTQVVS) constitute a mitochondrion transit peptide. Positions 296, 307, 383, 410, and 433 each coordinate Mn(2+).

This sequence belongs to the peptidase M24B family. Mn(2+) is required as a cofactor.

It localises to the mitochondrion. The protein localises to the nucleus. Functionally, aminopeptidase which cleaves preprotein intermediates that carry destabilizing N-ter amino acid residues after the mitochondrial processing peptidase (MPP) cleavage site and is thus critical for stabilization of the mitochondrial proteome. The polypeptide is Intermediate cleaving peptidase 55, mitochondrial (Arabidopsis thaliana (Mouse-ear cress)).